The sequence spans 25 residues: Caerin-1.4 (25 aa).

A Leucine amide modification is found at Leu-25.

This sequence belongs to the frog skin active peptide (FSAP) family. Caerin subfamily. Expressed by the skin parotoid and/or rostral glands.

Its subcellular location is the secreted. In terms of biological role, antibacterial peptide, that adopts an alpha helical conformation which can disrupt bacterial membranes. Each caerin displays a different antimicrobial specificity. In Ranoidea caerulea (Green tree frog), this protein is Caerin-1.4.